We begin with the raw amino-acid sequence, 457 residues long: Chromosomal replication initiator protein DnaA (457 aa).

Residues 1-71 (MSPSIWEKCL…LLKNFCNINT (71 aa)) are domain I, interacts with DnaA modulators. Positions 71-119 (TTPTLMLKICKPKIIQKKFFNELTLKKNILNSKLTYNVNTKLSNIIYSS) are domain II. Residues 120–337 (EINTNYTFQN…GALNKILANS (218 aa)) form a domain III, AAA+ region region. Residues glycine 165, glycine 167, lysine 168, and threonine 169 each coordinate ATP. The tract at residues 338 to 457 (DSKKKIITIN…FLTLLKILSS (120 aa)) is domain IV, binds dsDNA.

This sequence belongs to the DnaA family. As to quaternary structure, oligomerizes as a right-handed, spiral filament on DNA at oriC.

Its subcellular location is the cytoplasm. Its function is as follows. Plays an essential role in the initiation and regulation of chromosomal replication. ATP-DnaA binds to the origin of replication (oriC) to initiate formation of the DNA replication initiation complex once per cell cycle. Binds the DnaA box (a 9 base pair repeat at the origin) and separates the double-stranded (ds)DNA. Forms a right-handed helical filament on oriC DNA; dsDNA binds to the exterior of the filament while single-stranded (ss)DNA is stabiized in the filament's interior. The ATP-DnaA-oriC complex binds and stabilizes one strand of the AT-rich DNA unwinding element (DUE), permitting loading of DNA polymerase. After initiation quickly degrades to an ADP-DnaA complex that is not apt for DNA replication. Binds acidic phospholipids. This is Chromosomal replication initiator protein DnaA from Buchnera aphidicola subsp. Baizongia pistaciae (strain Bp).